The sequence spans 350 residues: MKELVVDLKEKSYSIIIKKGLINELSNEINKVYKGKKIFILTDENVNYHYGDKVKDSLINNGYDVKKIVLKPGEETKSFNTLPKIYNEFLDFKLTRSDLIITLGGGVIGDLGGFAASTFLRGIDFIQVPTSLLAQVDSSVGGKVAVDLDRGKNLVGSFYHPKVVLIDPDVLITLEEKFFKDGMAEVIKYGCIKDKEFFYKLKEFKSKDEVLDNIEDIIYTCCNIKRIVVENDEKDKGERMLLNFGHTLGHAIEAYYNFNKYTHGEAVGIGMYKIIKISEEKGIMPKGCADEIKDILIQYSLPYDIEIENSDEILETISLDKKNINSVLKIVLLESIGQSFLKSTNIEFFK.

NAD(+)-binding positions include 106-110, 130-131, Lys-143, and Lys-152; these read GVIGD and TS. Residues Glu-185, His-246, and His-263 each coordinate Zn(2+).

The protein belongs to the sugar phosphate cyclases superfamily. Dehydroquinate synthase family. It depends on Co(2+) as a cofactor. Zn(2+) serves as cofactor. Requires NAD(+) as cofactor.

It localises to the cytoplasm. The enzyme catalyses 7-phospho-2-dehydro-3-deoxy-D-arabino-heptonate = 3-dehydroquinate + phosphate. The protein operates within metabolic intermediate biosynthesis; chorismate biosynthesis; chorismate from D-erythrose 4-phosphate and phosphoenolpyruvate: step 2/7. Its function is as follows. Catalyzes the conversion of 3-deoxy-D-arabino-heptulosonate 7-phosphate (DAHP) to dehydroquinate (DHQ). This Clostridium botulinum (strain Alaska E43 / Type E3) protein is 3-dehydroquinate synthase.